The chain runs to 614 residues: BTB/POZ domain-containing protein At5g48800 (614 aa).

In terms of domain architecture, BTB spans 43–111 (SDITIEVNGG…CYGINFEITS (69 aa)). One can recognise an NPH3 domain in the interval 219–484 (DWWIEDLSVL…VQVLYFEQLK (266 aa)). Position 425 is a phosphotyrosine (Tyr-425). Disordered stretches follow at residues 492–525 (SYSD…KDNY) and 583–614 (GHSS…ASTD). Over residues 507–521 (SWRINSGALSATMSP) the composition is skewed to polar residues. Positions 522-562 (KDNYASLRRENRELKLELARLRMRLNDLEKEHICMKRDMQR) form a coiled coil. Positions 583-597 (GHSSSRGSSSPSKQS) are enriched in low complexity.

It belongs to the NPH3 family.

It participates in protein modification; protein ubiquitination. May act as a substrate-specific adapter of an E3 ubiquitin-protein ligase complex (CUL3-RBX1-BTB) which mediates the ubiquitination and subsequent proteasomal degradation of target proteins. This chain is BTB/POZ domain-containing protein At5g48800, found in Arabidopsis thaliana (Mouse-ear cress).